The sequence spans 85 residues: Toxin BmKa3 (85 aa).

Residues 1 to 19 (MNYLVFFSLALLLMTGVES) form the signal peptide. The LCN-type CS-alpha/beta domain occupies 21 to 83 (RDGYIADDKN…VPIRVPGKCN (63 aa)). 4 disulfides stabilise this stretch: cysteine 31–cysteine 82, cysteine 35–cysteine 55, cysteine 41–cysteine 65, and cysteine 45–cysteine 67.

Belongs to the long (4 C-C) scorpion toxin superfamily. Sodium channel inhibitor family. Alpha subfamily. As to expression, expressed by the venom gland.

Its subcellular location is the secreted. Functionally, alpha toxins bind voltage-independently at site-3 of sodium channels (Nav) and inhibit the inactivation of the activated channels, thereby blocking neuronal transmission. This is Toxin BmKa3 from Olivierus martensii (Manchurian scorpion).